The primary structure comprises 255 residues: Geranylgeranylglyceryl phosphate synthase (255 aa).

Mg(2+)-binding residues include D34 and T64. Residues 182–188 (YLEAGSG), 213–214 (GG), and 235–236 (GN) contribute to the sn-glycerol 1-phosphate site.

The protein belongs to the GGGP/HepGP synthase family. Group II subfamily. Mg(2+) is required as a cofactor.

Its subcellular location is the cytoplasm. It carries out the reaction sn-glycerol 1-phosphate + (2E,6E,10E)-geranylgeranyl diphosphate = sn-3-O-(geranylgeranyl)glycerol 1-phosphate + diphosphate. The protein operates within membrane lipid metabolism; glycerophospholipid metabolism. Prenyltransferase that catalyzes the transfer of the geranylgeranyl moiety of geranylgeranyl diphosphate (GGPP) to the C3 hydroxyl of sn-glycerol-1-phosphate (G1P). This reaction is the first ether-bond-formation step in the biosynthesis of archaeal membrane lipids. This Saccharolobus islandicus (strain M.14.25 / Kamchatka #1) (Sulfolobus islandicus) protein is Geranylgeranylglyceryl phosphate synthase.